The following is a 692-amino-acid chain: Elongation factor G (692 aa).

Positions 8–282 constitute a tr-type G domain; the sequence is DKTRNIGIMA…AVLDYLPAPT (275 aa). Residues 17–24, 81–85, and 135–138 contribute to the GTP site; these read AHIDAGKT, DTPGH, and NKMD.

This sequence belongs to the TRAFAC class translation factor GTPase superfamily. Classic translation factor GTPase family. EF-G/EF-2 subfamily.

The protein resides in the cytoplasm. Catalyzes the GTP-dependent ribosomal translocation step during translation elongation. During this step, the ribosome changes from the pre-translocational (PRE) to the post-translocational (POST) state as the newly formed A-site-bound peptidyl-tRNA and P-site-bound deacylated tRNA move to the P and E sites, respectively. Catalyzes the coordinated movement of the two tRNA molecules, the mRNA and conformational changes in the ribosome. In Bacillus pumilus (strain SAFR-032), this protein is Elongation factor G.